A 150-amino-acid chain; its full sequence is Protein A151R (150 aa).

It belongs to the asfivirus A151R family. In terms of assembly, monomer. Homodimer. Interacts with protein B119L. Interacts with membrane protein E248R. Zn(2+) is required as a cofactor.

In terms of biological role, may participate in a redox cascade for the formation of disulfide bonds in viral proteins. The protein is Protein A151R of African swine fever virus (isolate Pig/Kenya/KEN-50/1950) (ASFV).